Here is a 330-residue protein sequence, read N- to C-terminus: 2-oxoisovalerate dehydrogenase subunit alpha (330 aa).

Substrate contacts are provided by residues Phe44, Tyr73, 107–110 (MPGH), and Ser123. Position 72–74 (72–74 (YYR)) interacts with thiamine diphosphate. Residues 123 to 125 (SPV), 153 to 159 (GEGSSNQ), 183 to 187 (NKYAI), and His252 each bind thiamine diphosphate. 3 residues coordinate Mg(2+): Glu154, Asn183, and Tyr185. The segment at 249–272 (LTPHSSDDDDSSYRGREEVEEAKK) is disordered. Positions 259-272 (SSYRGREEVEEAKK) are enriched in basic and acidic residues.

The protein belongs to the BCKDHA family. Heterotetramer of two alpha and two beta chains. Directly associated with ODBB in the E1 complex. Requires thiamine diphosphate as cofactor.

It catalyses the reaction N(6)-[(R)-lipoyl]-L-lysyl-[protein] + 3-methyl-2-oxobutanoate + H(+) = N(6)-[(R)-S(8)-2-methylpropanoyldihydrolipoyl]-L-lysyl-[protein] + CO2. Functionally, the branched-chain alpha-keto dehydrogenase complex catalyzes the overall conversion of alpha-keto acids to acyl-CoA and CO(2). It contains multiple copies of three enzymatic components: branched-chain alpha-keto acid decarboxylase (E1), lipoamide acyltransferase (E2) and lipoamide dehydrogenase (E3). The protein is 2-oxoisovalerate dehydrogenase subunit alpha (bfmBAA) of Bacillus subtilis (strain 168).